Consider the following 432-residue polypeptide: Lipid-A-disaccharide synthase (432 aa).

Over residues 1-11 (MTGIGNQTSGI) the composition is skewed to polar residues. Positions 1–35 (MTGIGNQTSGIETGVHDRAPADGEPTALPISHSPL) are disordered.

The protein belongs to the LpxB family.

It catalyses the reaction a lipid X + a UDP-2-N,3-O-bis[(3R)-3-hydroxyacyl]-alpha-D-glucosamine = a lipid A disaccharide + UDP + H(+). Its pathway is bacterial outer membrane biogenesis; LPS lipid A biosynthesis. Functionally, condensation of UDP-2,3-diacylglucosamine and 2,3-diacylglucosamine-1-phosphate to form lipid A disaccharide, a precursor of lipid A, a phosphorylated glycolipid that anchors the lipopolysaccharide to the outer membrane of the cell. This is Lipid-A-disaccharide synthase from Xanthomonas oryzae pv. oryzae (strain MAFF 311018).